Consider the following 572-residue polypeptide: Sulfite reductase [NADPH] hemoprotein beta-component (572 aa).

[4Fe-4S] cluster is bound by residues Cys436, Cys442, Cys481, and Cys485. Cys485 is a binding site for siroheme.

This sequence belongs to the nitrite and sulfite reductase 4Fe-4S domain family. As to quaternary structure, alpha(8)-beta(8). The alpha component is a flavoprotein, the beta component is a hemoprotein. Siroheme serves as cofactor. The cofactor is [4Fe-4S] cluster.

The catalysed reaction is hydrogen sulfide + 3 NADP(+) + 3 H2O = sulfite + 3 NADPH + 4 H(+). The protein operates within sulfur metabolism; hydrogen sulfide biosynthesis; hydrogen sulfide from sulfite (NADPH route): step 1/1. In terms of biological role, component of the sulfite reductase complex that catalyzes the 6-electron reduction of sulfite to sulfide. This is one of several activities required for the biosynthesis of L-cysteine from sulfate. In Bacillus pumilus (strain SAFR-032), this protein is Sulfite reductase [NADPH] hemoprotein beta-component.